We begin with the raw amino-acid sequence, 155 residues long: Endoribonuclease YbeY (155 aa).

Zn(2+) contacts are provided by histidine 114, histidine 118, and histidine 124.

The protein belongs to the endoribonuclease YbeY family. It depends on Zn(2+) as a cofactor.

The protein resides in the cytoplasm. Single strand-specific metallo-endoribonuclease involved in late-stage 70S ribosome quality control and in maturation of the 3' terminus of the 16S rRNA. This is Endoribonuclease YbeY from Tolumonas auensis (strain DSM 9187 / NBRC 110442 / TA 4).